Here is a 228-residue protein sequence, read N- to C-terminus: Eukaryotic translation initiation factor 4E-1 (228 aa).

2 EIF4G-binding regions span residues 53–56 (HLLE) and 63–99 (FDTP…NNIH). MRNA contacts are provided by residues 71–76 (KQDDWG), Lys-103, and 121–122 (WE). An intrachain disulfide couples Cys-126 to Cys-164. An EIF4G-binding region spans residues 147–156 (YTLLAMIGEQ). Residues 171–176 (RGRAEK) and 216–220 (RKLDR) each bind mRNA.

Belongs to the eukaryotic initiation factor 4E family. In terms of assembly, EIF4F is a multi-subunit complex, the composition of which varies with external and internal environmental conditions. It is composed of at least EIF4A, EIF4E and EIF4G. EIF4E is also known to interact with other partners. In higher plants two isoforms of EIF4F have been identified, named isoform EIF4F and isoform EIF(iso)4F. Isoform EIF4F has subunits p220 and p26, whereas isoform EIF(iso)4F has subunits p82 and p28. (Microbial infection) Interacts with potyvirus viral genome-linked protein (VPg); this interaction is possible in susceptible hosts but impaired in resistant plants. According to the redox status, the Cys-126-Cys-164 disulfide bridge may have a role in regulating protein function by affecting its ability to bind capped mRNA.

Its subcellular location is the nucleus. It is found in the cytoplasm. In terms of biological role, component of the protein complex eIF4F, which is involved in the recognition of the mRNA cap, ATP-dependent unwinding of 5'-terminal secondary structure and recruitment of mRNA to the ribosome. Recognizes and binds the 7-methylguanosine-containing mRNA cap during an early step in the initiation of protein synthesis and facilitates ribosome binding by inducing the unwinding of the mRNAs secondary structures. Key component of recessive resistance to potyviruses. Functionally, (Microbial infection) Susceptibility host factor required for viral infection by recruiting viral RNAs to the host ribosomal complex via an interaction with viral genome-linked protein (VPg). Also seems to be involved in virus movement from cell-to-cell. The chain is Eukaryotic translation initiation factor 4E-1 from Pisum sativum (Garden pea).